Reading from the N-terminus, the 335-residue chain is GTPase Obg (335 aa).

Residues 1–158 (MFVDQITLEL…RLVELELKLI (158 aa)) form the Obg domain. The 176-residue stretch at 159 to 334 (ADIGLVGFPN…LYDLFKSKLS (176 aa)) folds into the OBG-type G domain. GTP-binding positions include 165 to 172 (GFPNAGKS), 190 to 194 (FTTLH), 215 to 218 (DIPG), 285 to 288 (NKID), and 315 to 317 (SGL). Mg(2+)-binding residues include Ser172 and Thr192.

The protein belongs to the TRAFAC class OBG-HflX-like GTPase superfamily. OBG GTPase family. As to quaternary structure, monomer. The cofactor is Mg(2+).

It is found in the cytoplasm. In terms of biological role, an essential GTPase which binds GTP, GDP and possibly (p)ppGpp with moderate affinity, with high nucleotide exchange rates and a fairly low GTP hydrolysis rate. Plays a role in control of the cell cycle, stress response, ribosome biogenesis and in those bacteria that undergo differentiation, in morphogenesis control. The protein is GTPase Obg of Chlamydia trachomatis serovar L2 (strain ATCC VR-902B / DSM 19102 / 434/Bu).